The primary structure comprises 3011 residues: Genome polyprotein (3011 aa).

Position 2 is an N-acetylserine; by host (S2). The segment at 2–23 (STNPKPQRKTKRNTNRRPQNVK) is interaction with STAT1. Positions 2–58 (STNPKPQRKTKRNTNRRPQNVKFPGGGQIVGGVCLLPRRGPRVGVRATRKTSERSQP) are interaction with EIF2AK2/PKR. The interaction with DDX3X stretch occupies residues 2–59 (STNPKPQRKTKRNTNRRPQNVKFPGGGQIVGGVCLLPRRGPRVGVRATRKTSERSQPR). A disordered region spans residues 2-75 (STNPKPQRKT…PKARRPEGRS (74 aa)). Residues 2-168 (STNPKPQRKT…EDGVNYATGN (167 aa)) lie on the Cytoplasmic side of the membrane. 2 consecutive short sequence motifs (nuclear localization signal) follow at residues 5–13 (PKPQRKTKR) and 38–43 (PRRGPR). The span at 7 to 16 (PQRKTKRNTN) shows a compositional bias: basic residues. Residue S53 is modified to Phosphoserine; by host. Short sequence motifs (nuclear localization signal) lie at residues 58–64 (PRGRRQP) and 66–71 (PKARRP). Positions 58–68 (PRGRRQPIPKA) are enriched in basic residues. The residue at position 99 (S99) is a Phosphoserine; by host. Residues 112-152 (PRRRSRNLGKVIDTLTCGFADLMGYIPLVGAPLGGAARALA) form an important for endoplasmic reticulum and mitochondrial localization region. S116 carries the post-translational modification Phosphoserine; by host PKA. The segment at 122 to 173 (VIDTLTCGFADLMGYIPLVGAPLGGAARALAHGVRVLEDGVNYATGNLPGCS) is interaction with APOA2. The tract at residues 164-167 (YATG) is important for lipid droplets localization. A helical transmembrane segment spans residues 169–189 (LPGCSFSIFLLALLSCLTVPA). Positions 178-191 (LLALLSCLTVPASA) are cleaved as a propeptide — ER anchor for the core protein, removed in mature form by host signal peptidase. Residues 190-358 (SAVEVRNSSG…AGAHWGVLAG (169 aa)) lie on the Lumenal side of the membrane. N-linked (GlcNAc...) asparagine; by host glycans are attached at residues N196, N209, and N234. Positions 265 to 296 (IVGAAAFCSAMYVGDLCGSIFLVGQLFTLSPR) are important for fusion. An N-linked (GlcNAc...) asparagine; by host glycan is attached at N305. Residues 359–379 (PAYYSMVGNWAKVLVVLLLFA) form a helical membrane-spanning segment. Residues 380 to 725 (GVDATTQVTG…WEYVVLLFLL (346 aa)) lie on the Lumenal side of the membrane. The tract at residues 385–411 (TQVTGGTAGRNAYRLASLFSTGPSQNI) is HVR1. N-linked (GlcNAc...) (high mannose) asparagine; by host glycosylation is found at N417, N423, N430, and N448. 3 disulfides stabilise this stretch: C429–C552, C486–C494, and C503–C508. An HVR2 region spans residues 474-479 (YGGKAS). Residues 480-493 (NDQRPYCWHYAPRP) are CD81-binding 1. N-linked (GlcNAc...) (high mannose) asparagine; by host glycosylation occurs at N532. N540 carries N-linked (GlcNAc...) asparagine; by host glycosylation. The tract at residues 544 to 551 (PPIGNWFG) is CD81-binding 2. N-linked (GlcNAc...) (high mannose) asparagine; by host glycosylation occurs at N556. Intrachain disulfides connect C564-C569, C581-C585, C597-C620, and C607-C644. 2 N-linked (GlcNAc...) (high mannose) asparagine; by host glycosylation sites follow: N623 and N645. Residues C652 and C677 are joined by a disulfide bond. The segment at 660-671 (AELSPLLLSTTQ) is PKR/eIF2-alpha phosphorylation homology domain (PePHD). Residues 726–746 (LADARICACLWMMLLISQVEA) form a helical membrane-spanning segment. Topologically, residues 747–757 (ALENLIVLNAA) are lumenal. A helical transmembrane segment spans residues 758 to 778 (SLAGTHGIVPFFIFFCAAWYL). Over 779 to 781 (KGK) the chain is Cytoplasmic. A helical membrane pass occupies residues 782–803 (WAPGLVYSVYGMWPLLLLLLAL). Over 804–813 (PQRAYALDQE) the chain is Lumenal. The helical transmembrane segment at 814–834 (LAASCGAVVFISLAVLTLSPY) threads the bilayer. The Cytoplasmic segment spans residues 835–838 (YKQY). A helical transmembrane segment spans residues 839 to 859 (MARGIWWLQYMLTRAEALLHV). Residues 860–881 (WVPSLNARGGRDGAILLMCVLH) are Lumenal-facing. The chain crosses the membrane as a helical span at residues 882 to 902 (PHLLFDITKIMLAILGPLWIL). The Peptidase C18 domain maps to 903-1026 (QASLLRVPYF…ALTDKGWRLL (124 aa)). Residues 903–1657 (QASLLRVPYF…CMSADLEVVT (755 aa)) are Cytoplasmic-facing. The segment at 904 to 1206 (ASLLRVPYFV…PVESLETTMR (303 aa)) is protease NS2-3. C922 carries S-palmitoyl cysteine; by host lipidation. Residues 929-949 (AGGHYVQMALLKLGALTGTYI) are interaction with host SCPS1. Active-site for protease NS2 activity; shared with dimeric partner residues include H952, E972, and C993. In terms of domain architecture, Peptidase S29 spans 1027-1208 (APITAYAQQT…ESLETTMRSP (182 aa)). Active-site charge relay system; for serine protease NS3 activity residues include H1083 and D1107. Residues C1123 and C1125 each coordinate Zn(2+). S1165 functions as the Charge relay system; for serine protease NS3 activity in the catalytic mechanism. The Zn(2+) site is built by C1171 and H1175. Residues 1217–1369 (PTVPQSYQVA…SNIEEVALSA (153 aa)) form the Helicase ATP-binding domain. 1230–1237 (APTGSGKS) provides a ligand contact to ATP. S1237 and E1317 together coordinate Mg(2+). Positions 1316–1319 (DECH) match the DECH box motif. Residues 1486–1497 (QRRGRTGRGKHG) are RNA-binding. The helical transmembrane segment at 1658 to 1678 (STWVLVGGVLAALAAYCLSTG) threads the bilayer. Residues 1679-1690 (SVVIVGRIILGG) form an NS3-binding region. The Cytoplasmic portion of the chain corresponds to 1679–1805 (SVVIVGRIIL…AVTSPLTTQQ (127 aa)). A helical membrane pass occupies residues 1806–1824 (TLFFNILGGWVAAQLASPA). Residues 1825–1828 (AATA) are Lumenal-facing. A helical membrane pass occupies residues 1829-1849 (FVGAGITGAVVGSVGLGKVLV). Residue D1850 is a topological domain, cytoplasmic. The helical transmembrane segment at 1851–1871 (IIAGYGAGVAGALVAFKIMSG) threads the bilayer. Residues 1872–1881 (ETPTTEDLVN) are Lumenal-facing. Residues 1882-1902 (LLPAILSPGALVVGVVCAAIL) form a helical membrane-spanning segment. Residues 1903-1972 (RRHVGPGEGA…WISSDCIAPC (70 aa)) are Cytoplasmic-facing. S-palmitoyl cysteine; by host attachment occurs at residues C1968 and C1972. An intramembrane segment occupies 1973-2002 (ASSWLKDVWDWICEVLSDFKNWLKAKLVPQ). Over 2003–2990 (LPGIPFVSCQ…YHSVSHARPR (988 aa)) the chain is Cytoplasmic. C2011, C2029, C2031, and C2052 together coordinate Zn(2+). The FKBP8-binding stretch occupies residues 2120–2208 (EFFTEVDGVR…ASSSASQLSA (89 aa)). The segment at 2120 to 2332 (EFFTEVDGVR…PVPPPRRKRT (213 aa)) is transcriptional activation. Positions 2135-2139 (PPCKP) are interaction with non-structural protein 4A. Positions 2187–2219 (ARRLKRGSPPSLASSSASQLSAPSLKATCTTHH) are disordered. Positions 2189–2441 (RLKRGSPPSL…TPCASEEAKL (253 aa)) are interaction with host SKP2. S2194 carries the phosphoserine; by host; in p56 modification. Residues 2194–2211 (SPPSLASSSASQLSAPSL) show a composition bias toward low complexity. 5 positions are modified to phosphoserine; by host; in p58: S2197, S2201, S2204, S2207, and S2210. Positions 2210-2249 (SLKATCTTHHDSPDADLIEANLLWRQEMGGNITRVESENK) are ISDR. Residues 2210-2275 (SLKATCTTHH…REISIPAEIL (66 aa)) are interaction with EIF2AK2/PKR. The interval 2249-2306 (KIVVLDSFDPLVAEEDDREISIPAEILRKFKQFPPAMPIWARPDYNPPLVEPWKRPDY) is NS4B-binding. Residues 2322 to 2325 (TPVP) carry the SH3-binding motif. The Nuclear localization signal signature appears at 2326–2334 (PPRRKRTVV). Residue K2350 forms a Glycyl lysine isopeptide (Lys-Gly) (interchain with G-Cter in ubiquitin) linkage. Positions 2352–2369 (FGSSTTSGVTSGEATESS) are enriched in low complexity. Residues 2352–2409 (FGSSTTSGVTSGEATESSPAPSCGGELDSEAESYSSMPPLEGEPGDPDLSDGSWSTVS) form a disordered region. The segment at 2354 to 2377 (SSTTSGVTSGEATESSPAPSCGGE) is V3. Phosphoserine; by host is present on residues S2449 and S2462. One can recognise a RdRp catalytic domain in the interval 2634 to 2752 (PMGFSYDTRC…ICESAGVQED (119 aa)). Residues D2640, D2738, and D2739 each contribute to the Mg(2+) site. The chain crosses the membrane as a helical span at residues 2991–3011 (LFLWCLLLLSVGVGIYLLPNR).

This sequence belongs to the hepacivirus polyprotein family. As to quaternary structure, homooligomer. Interacts with E1 (via C-terminus). Interacts with the non-structural protein 5A. Interacts (via N-terminus) with host STAT1 (via SH2 domain); this interaction results in decreased STAT1 phosphorylation and ubiquitin-mediated proteasome-dependent STAT1 degradation, leading to decreased IFN-stimulated gene transcription. Interacts with host STAT3; this interaction constitutively activates STAT3. Interacts with host LTBR receptor. Interacts with host TNFRSF1A receptor and possibly induces apoptosis. Interacts with host HNRPK. Interacts with host YWHAE. Interacts with host UBE3A/E6AP. Interacts with host DDX3X. Interacts with host APOA2. Interacts with host RXRA protein. Interacts with host SP110 isoform 3/Sp110b; this interaction sequesters the transcriptional corepressor SP110 away from the nucleus. Interacts with host CREB3 nuclear transcription protein; this interaction triggers cell transformation. Interacts with host ACY3. Interacts with host C1QR1. Interacts with host RBM24; this interaction, which enhances the interaction of the mature core protein with 5'-UTR, may inhibit viral translation and favor replication. Interacts with host EIF2AK2/PKR; this interaction induces the autophosphorylation of EIF2AK2. Part of the viral assembly initiation complex composed of NS2, E1, E2, NS3, NS4A, NS5A and the mature core protein. In terms of assembly, forms a heterodimer with envelope glycoprotein E2. Interacts with mature core protein. Interacts with protease NS2. The heterodimer E1/E2 interacts with host CLDN1; this interaction plays a role in viral entry into host cell. Interacts with host SPSB2 (via C-terminus). Part of the viral assembly initiation complex composed of NS2, E1, E2, NS3, NS4A, NS5A and the mature core protein. Interacts with host NEURL3; this interaction prevents E1 binding to glycoprotein E2. Forms a heterodimer with envelope glycoprotein E1. Interacts with host CD81 and SCARB1 receptors; these interactions play a role in viral entry into host cell. Interacts with host EIF2AK2/PKR; this interaction inhibits EIF2AK2 and probably allows the virus to evade the innate immune response. Interacts with host CD209/DC-SIGN and CLEC4M/DC-SIGNR. Interact with host SPCS1; this interaction is essential for viral particle assembly. Interacts with protease NS2. The heterodimer E1/E2 interacts with host CLDN1; this interaction plays a role in viral entry into host cell. Part of the viral assembly initiation complex composed of NS2, E1, E2, NS3, NS4A, NS5A and the mature core protein. Interacts with host SLC3A2/4F2hc; the interaction may facilitate viral entry into host cell. Interacts with human PLSCR1. As to quaternary structure, homohexamer. Homoheptamer. Interacts with protease NS2. In terms of assembly, homodimer. Interacts with host SPCS1; this interaction is essential for viral particle assembly. Interacts with envelope glycoprotein E1. Interacts with envelope glycoprotein E2. Interacts with viroporin p7. Interacts with serine protease/helicase NS3. Part of the replication complex composed of NS2, NS3, NS4A, NS4B, NS5A and the RNA-directed RNA polymerase embedded in an ER-derived membranous web. Part of the viral assembly initiation complex composed of NS2, E1, E2, NS3, NS4A, NS5A and the mature core protein. Interacts with protease NS2. Interacts with non-structural protein 4A; this interaction stabilizes the folding of NS3 serine protease. NS3-NS4A interaction is essential for NS3 activation and allows membrane anchorage of the latter. NS3/NS4A complex also prevents phosphorylation of host IRF3, thus preventing the establishment of dsRNA induced antiviral state. Interacts with host MAVS; this interaction leads to the cleavage and inhibition of host MAVS. Interacts with host TICAM1; this interaction leads to the cleavage and inhibition of host TICAM1. Interacts with host TANK-binding kinase/TBK1; this interaction results in the inhibition of the association between TBK1 and IRF3, which leads to the inhibition of IRF3 activation. Interacts with host RBM24. Part of the replication complex composed of NS2, NS3, NS4A, NS4B, NS5A and the RNA-directed RNA polymerase embedded in an ER-derived membranous web. Part of the viral assembly initiation complex composed of NS2, E1, E2, NS3, NS4A, NS5A and the mature core protein. As to quaternary structure, interacts with NS3 serine protease; this interaction stabilizes the folding of NS3 serine protease. NS3-NS4A interaction is essential for NS3 activation and allows membrane anchorage of the latter. Interacts with non-structural protein 5A (via N-terminus). Part of the replication complex composed of NS2, NS3, NS4A, NS4B, NS5A and the RNA-directed RNA polymerase embedded in an ER-derived membranous web. Part of the viral assembly initiation complex composed of NS2, E1, E2, NS3, NS4A, NS5A and the mature core protein. In terms of assembly, homomultimer. Interacts with non-structural protein NS5A. Interacts with host PLA2G4C; this interaction likely initiates the recruitment of replication complexes to lipid droplets. Interacts with host STING; this interaction disrupts the interaction between STING and TBK1 thereby suppressing the interferon signaling. Part of the replication complex composed of NS2, NS3, NS4A, NS4B, NS5A and the RNA-directed RNA polymerase embedded in an ER-derived membranous web. Monomer. Homodimer; dimerization is required for RNA-binding. Interacts with the mature core protein. Interacts (via N-terminus) with non-structural protein 4A. Interacts with non-structural protein 4B. Interacts (via region D2) with RNA-directed RNA polymerase. Part of the viral assembly initiation complex composed of NS2, E1, E2, NS3, NS4A, NS5A and the mature core protein. Part of the replication complex composed of NS2, NS3, NS4A, NS4B, NS5A and the RNA-directed RNA polymerase embedded in an ER-derived membranous web. Interacts with host GRB2. Interacts with host BIN1. Interacts with host PIK3R1. Interacts with host SRCAP. Interacts with host FKBP8. Interacts (via C-terminus) with host VAPB (via MSP domain). Interacts with host EIF2AK2/PKR; this interaction leads to disruption of EIF2AK2 dimerization by NS5A and probably allows the virus to evade the innate immune response. Interacts (via N-terminus) with host PACSIN2 (via N-terminus); this interaction attenuates protein kinase C alpha-mediated phosphorylation of PACSIN2 by disrupting the interaction between PACSIN2 and PRKCA. Interacts (via N-terminus) with host SRC kinase (via SH2 domain). Interacts with most Src-family kinases. Interacts with host IFI27 and SKP2; promotes the ubiquitin-mediated proteasomal degradation of NS5A. Interacts with host GPS2. Interacts with host TNFRSF21; this interaction allows the modulation by the virus of JNK, p38 MAPK, STAT3, and Akt signaling pathways in a DR6-dependent manner. Interacts (via N-terminus) with host CIDEB (via N-terminus); this interaction seems to regulate the association of HCV particles with APOE. Interacts with host CHKA/Choline Kinase-alpha; CHKA bridges host PI4KA and NS5A and potentiates NS5A-stimulated PI4KA activity, which then facilitates the targeting of the ternary complex to the ER for viral replication. Interacts with host SPSB2 (via C-terminus); this interaction targets NS5A for ubiquitination and degradation. Interacts with host RAB18; this interaction may promote the association of NS5A and other replicase components with lipid droplets. Interacts (via region D2) with host PPIA/CYPA; the interaction stimulates RNA-binding ability of NS5A and is dependent on the peptidyl-prolyl cis-trans isomerase activity of PPIA/CYPA. Interacts with host TRIM14; this interaction induces the degradation of NS5A. As to quaternary structure, homooligomer. Interacts with non-structural protein 5A. Interacts with host VAPB. Interacts with host PRK2/PKN2. Interacts with host HNRNPA1 and SEPT6; these interactions facilitate viral replication. Part of the replication complex composed of NS2, NS3, NS4A, NS4B, NS5A and the RNA-directed RNA polymerase. Requires Zn(2+) as cofactor. Mg(2+) is required as a cofactor. Post-translationally, specific enzymatic cleavages in vivo yield mature proteins. The structural proteins, core, E1, E2 and p7 are produced by proteolytic processing by host signal peptidases. The core protein precursor is synthesized as a 23 kDa, which is retained in the ER membrane through the hydrophobic signal peptide. Cleavage by the signal peptidase releases the 21 kDa mature core protein. The cleavage of the core protein precursor occurs between aminoacids 176 and 188 but the exact cleavage site is not known. Some degraded forms of the core protein appear as well during the course of infection. The other proteins (p7, NS2, NS3, NS4A, NS4B, NS5A and NS5B) are cleaved by the viral proteases. Autoprocessing between NS2 and NS3 is mediated by the NS2 cysteine protease catalytic domain and regulated by the NS3 N-terminal domain. Phosphorylated by host PKC and PKA. In terms of processing, ubiquitinated; mediated by UBE3A and leading to core protein subsequent proteasomal degradation. Post-translationally, highly N-glycosylated. Palmitoylation is required for NS2/3 autoprocessing and E2 recruitment to membranes. In terms of processing, palmitoylated. This modification may play a role in its polymerization or in protein-protein interactions. Post-translationally, phosphorylated on serines in a basal form termed p56. p58 is a hyperphosphorylated form of p56. p56 and p58 coexist in the cell in roughly equivalent amounts. Hyperphosphorylation is dependent on the presence of NS4A. Host CSNK1A1/CKI-alpha or RPS6KB1 kinases may be responsible for NS5A phosphorylation. Tyrosine phosphorylation is essential for the interaction with host SRC. In terms of processing, the N-terminus is phosphorylated by host PRK2/PKN2.

Its subcellular location is the host endoplasmic reticulum membrane. It is found in the host mitochondrion membrane. The protein resides in the virion. It localises to the host cytoplasm. The protein localises to the host nucleus. Its subcellular location is the host lipid droplet. It is found in the virion membrane. The protein resides in the host mitochondrion. It localises to the host cell membrane. The protein localises to the host perinuclear region. The catalysed reaction is Hydrolysis of four peptide bonds in the viral precursor polyprotein, commonly with Asp or Glu in the P6 position, Cys or Thr in P1 and Ser or Ala in P1'.. It carries out the reaction a ribonucleoside 5'-triphosphate + H2O = a ribonucleoside 5'-diphosphate + phosphate + H(+). The enzyme catalyses ATP + H2O = ADP + phosphate + H(+). It catalyses the reaction RNA(n) + a ribonucleoside 5'-triphosphate = RNA(n+1) + diphosphate. With respect to regulation, inhibited by the antiviral drug hexamethylene amiloride. Inhibition by amantadine appears to be genotype-dependent. Also inhibited by long-alkyl-chain iminosugar derivatives. Activity is up-regulated by PRK2/PKN2-mediated phosphorylation. In terms of biological role, packages viral RNA to form a viral nucleocapsid, and promotes virion budding. Participates in the viral particle production as a result of its interaction with the non-structural protein 5A. Binds RNA and may function as a RNA chaperone to induce the RNA structural rearrangements taking place during virus replication. Modulates viral translation initiation by interacting with viral IRES and 40S ribosomal subunit. Affects various cell signaling pathways, host immunity and lipid metabolism. Prevents the establishment of cellular antiviral state by blocking the interferon-alpha/beta (IFN-alpha/beta) and IFN-gamma signaling pathways and by blocking the formation of phosphorylated STAT1 and promoting ubiquitin-mediated proteasome-dependent degradation of STAT1. Activates STAT3 leading to cellular transformation. Regulates the activity of cellular genes, including c-myc and c-fos. May repress the promoter of p53, and sequester CREB3 and SP110 isoform 3/Sp110b in the cytoplasm. Represses cell cycle negative regulating factor CDKN1A, thereby interrupting an important check point of normal cell cycle regulation. Targets transcription factors involved in the regulation of inflammatory responses and in the immune response: suppresses TNF-induced NF-kappa-B activation, and activates AP-1. Binds to dendritic cells (DCs) via C1QR1, resulting in down-regulation of T-lymphocytes proliferation. Alters lipid metabolism by interacting with hepatocellular proteins involved in lipid accumulation and storage. Induces up-regulation of FAS promoter activity, and thereby contributes to the increased triglyceride accumulation in hepatocytes (steatosis). Its function is as follows. Forms a heterodimer with envelope glycoprotein E2, which mediates virus attachment to the host cell, virion internalization through clathrin-dependent endocytosis and fusion with host membrane. Fusion with the host cell is most likely mediated by both E1 and E2, through conformational rearrangements of the heterodimer required for fusion rather than a classical class II fusion mechanism. E1/E2 heterodimer binds host apolipoproteins such as APOB and ApoE thereby forming a lipo-viro-particle (LVP). APOE associated to the LVP allows the initial virus attachment to cell surface receptors such as the heparan sulfate proteoglycans (HSPGs), syndecan-1 (SDC1), syndecan-1 (SDC2), the low-density lipoprotein receptor (LDLR) and scavenger receptor class B type I (SCARB1). The cholesterol transfer activity of SCARB1 allows E2 exposure and binding of E2 to SCARB1 and the tetraspanin CD81. E1/E2 heterodimer binding on CD81 activates the epithelial growth factor receptor (EGFR) signaling pathway. Diffusion of the complex E1-E2-EGFR-SCARB1-CD81 to the cell lateral membrane allows further interaction with Claudin 1 (CLDN1) and occludin (OCLN) to finally trigger HCV entry. Functionally, forms a heterodimer with envelope glycoprotein E1, which mediates virus attachment to the host cell, virion internalization through clathrin-dependent endocytosis and fusion with host membrane. Fusion with the host cell is most likely mediated by both E1 and E2, through conformational rearrangements of the heterodimer required for fusion rather than a classical class II fusion mechanism. The interaction between envelope glycoprotein E2 and host apolipoprotein E/APOE allows the proper assembly, maturation and infectivity of the viral particles. This interaction is probably promoted via the up-regulation of cellular autophagy by the virus. E1/E2 heterodimer binds host apolipoproteins such as APOB and APOE thereby forming a lipo-viro-particle (LVP). APOE associated to the LVP allows the initial virus attachment to cell surface receptors such as the heparan sulfate proteoglycans (HSPGs), syndecan-1 (SDC1), syndecan-1 (SDC2), the low-density lipoprotein receptor (LDLR) and scavenger receptor class B type I (SCARB1). The cholesterol transfer activity of SCARB1 allows E2 exposure and binding of E2 to SCARB1 and the tetraspanin CD81. E1/E2 heterodimer binding on CD81 activates the epithelial growth factor receptor (EGFR) signaling pathway. Diffusion of the complex E1-E2-EGFR-SCARB1-CD81 to the cell lateral membrane allows further interaction with Claudin 1 (CLDN1) and occludin (OCLN) to finally trigger HCV entry. Inhibits host EIF2AK2/PKR activation, preventing the establishment of an antiviral state. Viral ligand for CD209/DC-SIGN and CLEC4M/DC-SIGNR, which are respectively found on dendritic cells (DCs), and on liver sinusoidal endothelial cells and macrophage-like cells of lymph node sinuses. These interactions allow the capture of circulating HCV particles by these cells and subsequent facilitated transmission to permissive cells such as hepatocytes and lymphocyte subpopulations. The interaction between E2 and host amino acid transporter complex formed by SLC3A2 and SLC7A5/LAT1 may facilitate viral entry into host cell. Ion channel protein that acts as a viroporin and plays an essential role in the assembly, envelopment and secretion of viral particles. Regulates the host cell secretory pathway, which induces the intracellular retention of viral glycoproteins and favors assembly of viral particles. Creates a pore in acidic organelles and releases Ca(2+) and H(+) in the cytoplasm of infected cells, leading to a productive viral infection. High levels of cytoplasmic Ca(2+) may trigger membrane trafficking and transport of viral ER-associated proteins to viroplasms, sites of viral genome replication. This ionic imbalance induces the assembly of the inflammasome complex, which triggers the maturation of pro-IL-1beta into IL-1beta through the action of caspase-1. Targets also host mitochondria and induces mitochondrial depolarization. In addition of its role as a viroporin, acts as a lipid raft adhesion factor. In terms of biological role, cysteine protease required for the proteolytic auto-cleavage between the non-structural proteins NS2 and NS3. The N-terminus of NS3 is required for the function of NS2 protease (active region NS2-3). Promotes the initiation of viral particle assembly by mediating the interaction between structural and non-structural proteins. Its function is as follows. Displays three enzymatic activities: serine protease with a chymotrypsin-like fold, NTPase and RNA helicase. NS3 serine protease, in association with NS4A, is responsible for the cleavages of NS3-NS4A, NS4A-NS4B, NS4B-NS5A and NS5A-NS5B. The NS3/NS4A complex prevents phosphorylation of host IRF3, thus preventing the establishment of dsRNA induced antiviral state. The NS3/NS4A complex induces host amino acid transporter component SLC3A2, thus contributing to HCV propagation. NS3 RNA helicase binds to RNA and unwinds both dsDNA and dsRNA in the 3' to 5' direction, and likely resolves RNA complicated stable secondary structures in the template strand. Binds a single ATP and catalyzes the unzipping of a single base pair of dsRNA. Inhibits host antiviral proteins TBK1 and IRF3 thereby preventing the establishment of an antiviral state. Cleaves host MAVS/CARDIF thereby preventing the establishment of an antiviral state. Cleaves host TICAM1/TRIF, thereby disrupting TLR3 signaling and preventing the establishment of an antiviral state. Functionally, induces a specific membrane alteration that serves as a scaffold for the virus replication complex. This membrane alteration gives rise to the so-called ER-derived membranous web that contains the replication complex. NS4B self-interaction contributes to its function in membranous web formation. Promotes host TRIF protein degradation in a CASP8-dependent manner thereby inhibiting host TLR3-mediated interferon signaling. Disrupts the interaction between STING and TBK1 contributing to the inhibition of interferon signaling. Phosphorylated protein that is indispensable for viral replication and assembly. Both hypo- and hyperphosphorylated states are required for the viral life cycle. The hyperphosphorylated form of NS5A is an inhibitor of viral replication. Involved in RNA-binding and especially in binding to the viral genome. Zinc is essential for RNA-binding. Participates in the viral particle production as a result of its interaction with the mature viral core protein. Its interaction with host VAPB may target the viral replication complex to vesicles. Down-regulates viral IRES translation initiation. Mediates interferon resistance, presumably by interacting with and inhibiting host EIF2AK2/PKR. Prevents BIN1-induced apoptosis. Acts as a transcriptional activator of some host genes important for viral replication when localized in the nucleus. Via the interaction with host PACSIN2, modulates lipid droplet formation in order to promote virion assembly. Modulates TNFRSF21/DR6 signaling pathway for viral propagation. In terms of biological role, RNA-dependent RNA polymerase that performs primer-template recognition and RNA synthesis during viral replication. Initiates RNA transcription/replication at a flavin adenine dinucleotide (FAD), resulting in a 5'- FAD cap on viral RNAs. In this way, recognition of viral 5' RNA by host pattern recognition receptors can be bypassed, thereby evading activation of antiviral pathways. In Hepatitis C virus genotype 1c (isolate India) (HCV), this protein is Genome polyprotein.